The primary structure comprises 210 residues: Na(+)-translocating NADH-quinone reductase subunit D (210 aa).

5 consecutive transmembrane segments (helical) span residues 42–62, 72–92, 103–123, 131–151, and 178–198; these read FVMT…VSLI, IIVQ…VLKA, VFVG…AFAM, LIDG…VGFF, and NGLM…IWVI.

Belongs to the NqrDE/RnfAE family. Composed of six subunits; NqrA, NqrB, NqrC, NqrD, NqrE and NqrF.

It localises to the cell inner membrane. The enzyme catalyses a ubiquinone + n Na(+)(in) + NADH + H(+) = a ubiquinol + n Na(+)(out) + NAD(+). In terms of biological role, NQR complex catalyzes the reduction of ubiquinone-1 to ubiquinol by two successive reactions, coupled with the transport of Na(+) ions from the cytoplasm to the periplasm. NqrA to NqrE are probably involved in the second step, the conversion of ubisemiquinone to ubiquinol. The chain is Na(+)-translocating NADH-quinone reductase subunit D from Vibrio campbellii (strain ATCC BAA-1116).